We begin with the raw amino-acid sequence, 215 residues long: Proteasome subunit beta (215 aa).

Positions 1–12 are cleaved as a propeptide — removed in mature form; by autocatalysis; sequence MLGEIQDKVYKG. Threonine 13 functions as the Nucleophile in the catalytic mechanism.

This sequence belongs to the peptidase T1B family. In terms of assembly, the 20S proteasome core is composed of 14 alpha and 14 beta subunits that assemble into four stacked heptameric rings, resulting in a barrel-shaped structure. The two inner rings, each composed of seven catalytic beta subunits, are sandwiched by two outer rings, each composed of seven alpha subunits. The catalytic chamber with the active sites is on the inside of the barrel. Has a gated structure, the ends of the cylinder being occluded by the N-termini of the alpha-subunits. Is capped at one or both ends by the proteasome regulatory ATPase, PAN.

The protein localises to the cytoplasm. It carries out the reaction Cleavage of peptide bonds with very broad specificity.. The formation of the proteasomal ATPase PAN-20S proteasome complex, via the docking of the C-termini of PAN into the intersubunit pockets in the alpha-rings, triggers opening of the gate for substrate entry. Interconversion between the open-gate and close-gate conformations leads to a dynamic regulation of the 20S proteasome proteolysis activity. Functionally, component of the proteasome core, a large protease complex with broad specificity involved in protein degradation. In Archaeoglobus profundus (strain DSM 5631 / JCM 9629 / NBRC 100127 / Av18), this protein is Proteasome subunit beta.